We begin with the raw amino-acid sequence, 440 residues long: Chromosome partition protein MukF (440 aa).

A leucine-zipper region spans residues 208–236 (LSETSGTLRELQDTLDAAGDKLQANLLRI).

It belongs to the MukF family. Interacts, and probably forms a ternary complex, with MukE and MukB via its C-terminal region. The complex formation is stimulated by calcium or magnesium. It is required for an interaction between MukE and MukB.

It localises to the cytoplasm. The protein localises to the nucleoid. Involved in chromosome condensation, segregation and cell cycle progression. May participate in facilitating chromosome segregation by condensation DNA from both sides of a centrally located replisome during cell division. Not required for mini-F plasmid partitioning. Probably acts via its interaction with MukB and MukE. Overexpression results in anucleate cells. It has a calcium binding activity. This Klebsiella pneumoniae (strain 342) protein is Chromosome partition protein MukF.